The sequence spans 177 residues: Coatomer subunit zeta-1 (177 aa).

The residue at position 1 (methionine 1) is an N-acetylmethionine.

It belongs to the adaptor complexes small subunit family. Oligomeric complex that consists of at least the alpha, beta, beta', gamma, delta, epsilon and zeta subunits.

Its subcellular location is the cytoplasm. It is found in the golgi apparatus membrane. The protein resides in the cytoplasmic vesicle. It localises to the COPI-coated vesicle membrane. The coatomer is a cytosolic protein complex that binds to dilysine motifs and reversibly associates with Golgi non-clathrin-coated vesicles, which further mediate biosynthetic protein transport from the ER, via the Golgi up to the trans Golgi network. Coatomer complex is required for budding from Golgi membranes, and is essential for the retrograde Golgi-to-ER transport of dilysine-tagged proteins. The zeta subunit may be involved in regulating the coat assembly and, hence, the rate of biosynthetic protein transport due to its association-dissociation properties with the coatomer complex. The chain is Coatomer subunit zeta-1 (COPZ1) from Homo sapiens (Human).